The sequence spans 467 residues: Tel2-interacting protein 2 (467 aa).

Positions 4–45 (YKELARRLHTLQSKNEKEALEKQIDFLDKLVVEVDSLVHEQD) form a coiled coil.

The protein belongs to the TTI2 family. In terms of assembly, component of the TTT complex composed of tel2, tti1 and tti2. Interacts with tel2 and ttiI1. Component of the ASTRA complex composed of at least rvb1, rvb2, tra1, tel2, tti1 and tti2.

Its subcellular location is the nucleus. Component of the tel2-tti1-tti2 (TTT) complex that stabilizes protein levels of the phosphatidylinositol 3-kinase-related protein kinase (PIKK) family proteins. The TTT complex is involved in the cellular resistance to DNA damage stresses, like ionizing radiation (IR), ultraviolet (UV) and mitomycin C (MMC). Component of the ASTRA complex involved in chromatin remodeling. In Schizosaccharomyces pombe (strain 972 / ATCC 24843) (Fission yeast), this protein is Tel2-interacting protein 2.